Consider the following 858-residue polypeptide: Protein 4.1 (858 aa).

The disordered stretch occupies residues 1-125; it reads MTTEKSLAAE…KEIELGNSLD (125 aa). Residue serine 14 is modified to Phosphoserine. The span at 31–50 shows a compositional bias: low complexity; it reads QQETQLEEASQAAAAEGSDQ. Position 62 is a phosphothreonine (threonine 62). Residues 63–77 show a composition bias toward basic and acidic residues; that stretch reads PTHEDLTKNKERTSE. Over residues 78-89 the composition is skewed to low complexity; it reads SRGLSRLLSSFL. 8 positions are modified to phosphoserine: serine 86, serine 87, serine 97, serine 106, serine 123, serine 151, serine 153, and serine 154. Residues 103-119 are compositionally biased toward basic and acidic residues; the sequence is EVESEKEKGEGGQKEIE. The tract at residues 155-208 is disordered; the sequence is IETQPAQEEHREDPDSETKEGEGIEECSGTEVKEDPESRAEREPEASQKPVRRH. Basic and acidic residues-rich tracts occupy residues 161–176 and 185–200; these read QEEH…KEGE and EVKE…EPEA. Residue serine 192 is modified to Phosphoserine. One can recognise an FERM domain in the interval 211 to 492; that stretch reads MHCKVSLLDD…EHHTFFRLTS (282 aa). Residue tyrosine 223 is modified to Phosphotyrosine. Threonine 379 carries the post-translational modification Phosphothreonine. A hydrophilic region spans residues 495–608; sequence TIPKSKFLAL…PAEPEPTEAW (114 aa). Residues 518–636 are disordered; sequence TRQASALIDR…TQKLAGKGED (119 aa). Phosphoserine is present on residues serine 522, serine 541, serine 543, and serine 556. Composition is skewed to basic and acidic residues over residues 581-595 and 606-615; these read TPKE…RGEE and EAWKVEKTHT. The interval 609-707 is spectrin--actin-binding; that stretch reads KVEKTHTEVT…WDKRLSTHSP (99 aa). The segment covering 616-629 has biased composition (polar residues); that stretch reads EVTVPTSNGDQTQK. Tyrosine 654 carries the post-translational modification Phosphotyrosine. Serine 658, serine 668, serine 678, serine 703, and serine 706 each carry phosphoserine. Residues 710–858 form a C-terminal (CTD) region; sequence TLNINGQVPT…VHQETEISEE (149 aa). 2 positions are modified to phosphothreonine: threonine 730 and threonine 853.

Binds with a high affinity to glycophorin and with lower affinity to band III protein. Associates with the nuclear mitotic apparatus. Binds calmodulin, CPAP and DLG1. Also found to associate with contractile apparatus and tight junctions. Interacts with NUMA1; this interaction is negatively regulated by CDK1 during metaphase and promotes anaphase-specific localization of NUMA1 in symmetrically dividing cells. Interacts with ATP2B1; regulates small intestinal calcium absorption through regulation of membrane expression of ATP2B1. Post-translationally, O-glycosylated; contains N-acetylglucosamine side chains in the C-terminal domain. In terms of processing, phosphorylated at multiple sites by different protein kinases and each phosphorylation event selectively modulates the protein's functions. Phosphorylation on Tyr-654 reduces the ability of 4.1 to promote the assembly of the spectrin/actin/4.1 ternary complex.

Its subcellular location is the nucleus. The protein resides in the cytoplasm. It is found in the cytoskeleton. It localises to the cell cortex. In terms of biological role, protein 4.1 is a major structural element of the erythrocyte membrane skeleton. It plays a key role in regulating membrane physical properties of mechanical stability and deformability by stabilizing spectrin-actin interaction. Recruits DLG1 to membranes. Required for dynein-dynactin complex and NUMA1 recruitment at the mitotic cell cortex during anaphase. The polypeptide is Protein 4.1 (Mus musculus (Mouse)).